The following is a 160-amino-acid chain: Sulfur-rich protein (160 aa).

The next 2 membrane-spanning stretches (helical) occupy residues isoleucine 63 to leucine 83 and phenylalanine 92 to methionine 112.

Its subcellular location is the membrane. The protein is Sulfur-rich protein (srp) of Chlamydophila psittaci (strain ATCC VR-125 / 6BC) (Chlamydia psittaci).